We begin with the raw amino-acid sequence, 290 residues long: MSDTEQELQRVIRRHYREKRELQAHIQTLKASVPKNDKGRRKQMLADISRLEAEMEQRHKQELEKFGENPDSSVDSVTADLEKMNLENMPPRPPKAQKRRDRRAHQERRHQERMPAAQAEQLAANRREEEEKVAAILGAKNLEMKTIPADGHCMYRAIQDQLVFSVTIESLRYRTAYYMRKHIDDFLPFFTEPEAGNFYTREDFLRYCDDIVHNASWGGQLELRALSHVLQTPIEVVQANSPTIVIGEEYTRKPVTLVYLHYACDFGEHYNSVKPIEVAGAFGGMAPRLF.

Positions 27-117 are disordered; sequence QTLKASVPKN…RRHQERMPAA (91 aa). Basic and acidic residues predominate over residues 49-68; sequence SRLEAEMEQRHKQELEKFGE. Basic residues predominate over residues 95 to 108; it reads KAQKRRDRRAHQER. An OTU domain is found at 142–276; sequence LEMKTIPADG…GEHYNSVKPI (135 aa). Positions 147–153 are cys-loop; it reads IPADGHC. The active site involves D150. C153 acts as the Nucleophile in catalysis. The variable-loop stretch occupies residues 211 to 221; that stretch reads IVHNASWGGQL. The tract at residues 259-269 is his-loop; it reads YLHYACDFGEH. H269 is an active-site residue.

The catalysed reaction is Thiol-dependent hydrolysis of ester, thioester, amide, peptide and isopeptide bonds formed by the C-terminal Gly of ubiquitin (a 76-residue protein attached to proteins as an intracellular targeting signal).. Deubiquitinating enzyme that hydrolyzes 'Lys-27'-, 'Lys-29'- and 'Lys-33'-linked polyubiquitin chains. Also able to hydrolyze 'Lys-11'-linked ubiquitin chains. The polypeptide is OTU domain-containing protein 6A (Otud6a) (Mus musculus (Mouse)).